A 185-amino-acid polypeptide reads, in one-letter code: Elongation factor P (185 aa).

Belongs to the elongation factor P family.

It localises to the cytoplasm. It functions in the pathway protein biosynthesis; polypeptide chain elongation. In terms of biological role, involved in peptide bond synthesis. Stimulates efficient translation and peptide-bond synthesis on native or reconstituted 70S ribosomes in vitro. Probably functions indirectly by altering the affinity of the ribosome for aminoacyl-tRNA, thus increasing their reactivity as acceptors for peptidyl transferase. The protein is Elongation factor P of Streptococcus uberis (strain ATCC BAA-854 / 0140J).